The sequence spans 187 residues: ATP synthase subunit delta, chloroplastic (187 aa).

The protein belongs to the ATPase delta chain family. In terms of assembly, F-type ATPases have 2 components, F(1) - the catalytic core - and F(0) - the membrane proton channel. F(1) has five subunits: alpha(3), beta(3), gamma(1), delta(1), epsilon(1). CF(0) has four main subunits: a(1), b(1), b'(1) and c(10-14). The alpha and beta chains form an alternating ring which encloses part of the gamma chain. F(1) is attached to F(0) by a central stalk formed by the gamma and epsilon chains, while a peripheral stalk is formed by the delta, b and b' chains.

It localises to the plastid. The protein resides in the chloroplast thylakoid membrane. Its function is as follows. F(1)F(0) ATP synthase produces ATP from ADP in the presence of a proton or sodium gradient. F-type ATPases consist of two structural domains, F(1) containing the extramembraneous catalytic core and F(0) containing the membrane proton channel, linked together by a central stalk and a peripheral stalk. During catalysis, ATP synthesis in the catalytic domain of F(1) is coupled via a rotary mechanism of the central stalk subunits to proton translocation. In terms of biological role, this protein is part of the stalk that links CF(0) to CF(1). It either transmits conformational changes from CF(0) to CF(1) or is implicated in proton conduction. This is ATP synthase subunit delta, chloroplastic from Trieres chinensis (Marine centric diatom).